The sequence spans 188 residues: MINAQDIKNGTCIRMDGKLYFCIEFLHVKPGKGNTFMRTKLKDVVSGYVLERRFNIGEKLEDVRVERRPYQYLYKEGEDYIFMNQETFDQHPIAHDLINGVDFLLEGAVVEVVSDASTETVLYADMPIKVQMKVTYTEPGLKGDTATNTLKPATVESGATVRVPLFISEGETIEIDTRDGSYVGRVKA.

The protein belongs to the elongation factor P family.

Its subcellular location is the cytoplasm. It functions in the pathway protein biosynthesis; polypeptide chain elongation. In terms of biological role, involved in peptide bond synthesis. Stimulates efficient translation and peptide-bond synthesis on native or reconstituted 70S ribosomes in vitro. Probably functions indirectly by altering the affinity of the ribosome for aminoacyl-tRNA, thus increasing their reactivity as acceptors for peptidyl transferase. This chain is Elongation factor P, found in Bacteroides fragilis (strain ATCC 25285 / DSM 2151 / CCUG 4856 / JCM 11019 / LMG 10263 / NCTC 9343 / Onslow / VPI 2553 / EN-2).